Consider the following 229-residue polypeptide: NAD(P)H-hydrate epimerase (229 aa).

The 215-residue stretch at 10 to 224 (SREVDQIAIE…DIGIPPALLD (215 aa)) folds into the YjeF N-terminal domain. 57–61 (NNGGD) contributes to the (6S)-NADPHX binding site. Asn58 and Asp129 together coordinate K(+). Residues 133–139 (GTGIRGQ) and Asp167 each bind (6S)-NADPHX. A K(+)-binding site is contributed by Ser170.

This sequence belongs to the NnrE/AIBP family. It depends on K(+) as a cofactor.

The catalysed reaction is (6R)-NADHX = (6S)-NADHX. It carries out the reaction (6R)-NADPHX = (6S)-NADPHX. Functionally, catalyzes the epimerization of the S- and R-forms of NAD(P)HX, a damaged form of NAD(P)H that is a result of enzymatic or heat-dependent hydration. This is a prerequisite for the S-specific NAD(P)H-hydrate dehydratase to allow the repair of both epimers of NAD(P)HX. The protein is NAD(P)H-hydrate epimerase of Rubinisphaera brasiliensis (strain ATCC 49424 / DSM 5305 / JCM 21570 / IAM 15109 / NBRC 103401 / IFAM 1448) (Planctomyces brasiliensis).